The following is a 199-amino-acid chain: Probable molybdenum cofactor guanylyltransferase (199 aa).

GTP is bound by residues 6–8, Lys18, Asp65, and Asp97; that span reads LAG. Residue Asp97 coordinates Mg(2+).

It belongs to the MobA family. Mg(2+) serves as cofactor.

The protein resides in the cytoplasm. The enzyme catalyses Mo-molybdopterin + GTP + H(+) = Mo-molybdopterin guanine dinucleotide + diphosphate. Transfers a GMP moiety from GTP to Mo-molybdopterin (Mo-MPT) cofactor (Moco or molybdenum cofactor) to form Mo-molybdopterin guanine dinucleotide (Mo-MGD) cofactor. The polypeptide is Probable molybdenum cofactor guanylyltransferase (Staphylococcus aureus (strain COL)).